A 289-amino-acid chain; its full sequence is Mas-related G-protein coupled receptor member G (289 aa).

At 1-13 (MFGLFGLWRTFDS) the chain is on the extracellular side. Residues 14–34 (VVFYLTLIVGLGGPVGNGLVL) traverse the membrane as a helical segment. Topologically, residues 35–42 (WNLGFRIK) are cytoplasmic. The chain crosses the membrane as a helical span at residues 43-63 (KGPFSIYLLHLAAADFLFLSC). Over 64–78 (RVGFSVAQAALGAQD) the chain is Extracellular. Residues 79-99 (TLYFVLTFLWFAVGLWLLAAF) form a helical membrane-spanning segment. Over 100–120 (SVERCLSDLFPACYQGCRPRH) the chain is Cytoplasmic. The chain crosses the membrane as a helical span at residues 121-141 (ASAVLCALVWTPTLPAVPLPA). Residues 142–163 (NACGLLRNSACPLVCPRYHVAS) lie on the Extracellular side of the membrane. Residues 164–184 (VTWFLVLARVAWTAGVVLFVW) traverse the membrane as a helical segment. Residues 185–195 (VTCCSTRPRPR) are Cytoplasmic-facing. Residues 196 to 216 (LYGIVLGALLLLFFCGLPSVF) form a helical membrane-spanning segment. Residues 217-221 (YWSLQ) lie on the Extracellular side of the membrane. The helical transmembrane segment at 222–242 (PLLNFLLPVFSPLATLLACVN) threads the bilayer. At 243-289 (SSSKPLIYSGLGRQPGKREPLRSVLRRALGEGAELGARGQSLPMGLL) the chain is on the cytoplasmic side.

It belongs to the G-protein coupled receptor 1 family. Mas subfamily.

The protein localises to the cell membrane. Functionally, orphan receptor. May regulate nociceptor function and/or development, including the sensation or modulation of pain. The polypeptide is Mas-related G-protein coupled receptor member G (MRGPRG) (Homo sapiens (Human)).